Consider the following 316-residue polypeptide: Ribosomal RNA small subunit methyltransferase H (316 aa).

S-adenosyl-L-methionine-binding positions include 35-37 (AGH), Asp-55, Phe-84, Asp-105, and Gln-112.

This sequence belongs to the methyltransferase superfamily. RsmH family.

The protein localises to the cytoplasm. The catalysed reaction is cytidine(1402) in 16S rRNA + S-adenosyl-L-methionine = N(4)-methylcytidine(1402) in 16S rRNA + S-adenosyl-L-homocysteine + H(+). In terms of biological role, specifically methylates the N4 position of cytidine in position 1402 (C1402) of 16S rRNA. The sequence is that of Ribosomal RNA small subunit methyltransferase H from Streptococcus gordonii (strain Challis / ATCC 35105 / BCRC 15272 / CH1 / DL1 / V288).